Reading from the N-terminus, the 809-residue chain is Endoplasmin homolog (809 aa).

The N-terminal stretch at 1–18 (MRKWALSCALLLVLLLTT) is a signal peptide. 4 residues coordinate ATP: Asn-111, Asp-155, Asn-168, and Phe-200. N-linked (GlcNAc...) asparagine glycosylation is present at Asn-111. Acidic residues predominate over residues 293-320 (VPADEEESNEEEESTTETTEEEETEDDE). A disordered region spans residues 293–329 (VPADEEESNEEEESTTETTEEEETEDDEEKKPKTKTV). N-linked (GlcNAc...) asparagine glycans are attached at residues Asn-410, Asn-450, and Asn-617. The interval 766–809 (SLDLSPDAAVEEEEEVEEPEVEEKESAKQEAEEPEHEQYDKDEL) is disordered. Over residues 774-788 (AVEEEEEVEEPEVEE) the composition is skewed to acidic residues. Over residues 789 to 809 (KESAKQEAEEPEHEQYDKDEL) the composition is skewed to basic and acidic residues. The Prevents secretion from ER signature appears at 806-809 (KDEL).

This sequence belongs to the heat shock protein 90 family.

It localises to the endoplasmic reticulum lumen. Its function is as follows. May have a molecular chaperone role in the processing of secreted materials. The protein is Endoplasmin homolog of Hordeum vulgare (Barley).